We begin with the raw amino-acid sequence, 457 residues long: Sensor protein CpxA (457 aa).

The Cytoplasmic segment spans residues 1-7; sequence MIGSLTA. The chain crosses the membrane as a helical span at residues 8-29; it reads RIFAIFWLTLALVLMLVLMLPK. At 30 to 163 the chain is on the periplasmic side; it reads LDSRQMTELL…SDFINLLFDR (134 aa). Residues 164-184 traverse the membrane as a helical segment; the sequence is PLLLLIVTMLVSTPLLLWLAW. The region spanning 185 to 237 is the HAMP domain; that stretch reads SLAKPARKLKNAADEVAQGNLRQHPELEAGPQEFLAAGASFNQMVTALERMMT. Topologically, residues 185–457 are cytoplasmic; it reads SLAKPARKLK…VIWLPLYKRS (273 aa). The region spanning 245–455 is the Histidine kinase domain; sequence DISHELRTPL…RLVIWLPLYK (211 aa). A Phosphohistidine; by autocatalysis modification is found at His248.

It is found in the cell inner membrane. The enzyme catalyses ATP + protein L-histidine = ADP + protein N-phospho-L-histidine.. This protein is involved in several diverse cellular processes, such as the functioning of acetohydroxyacid synthetase I, in the biosynthesis of isoleucine and valine, the TraJ protein activation activity for tra gene expression in F plasmid, and the synthesis, translocation, or stability of cell envelope proteins. Activates CpxR by phosphorylation. This is Sensor protein CpxA (cpxA) from Escherichia coli O157:H7.